We begin with the raw amino-acid sequence, 367 residues long: tRNA-specific 2-thiouridylase MnmA (367 aa).

Residues 9 to 16 and phenylalanine 35 contribute to the ATP site; that span reads LMSGGVDS. The Nucleophile role is filled by cysteine 107. Cysteine 107 and cysteine 205 are oxidised to a cystine. Glycine 131 serves as a coordination point for ATP. The segment at 155–157 is interaction with tRNA; that stretch reads KDQ. Cysteine 205 serves as the catalytic Cysteine persulfide intermediate.

The protein belongs to the MnmA/TRMU family.

Its subcellular location is the cytoplasm. The catalysed reaction is S-sulfanyl-L-cysteinyl-[protein] + uridine(34) in tRNA + AH2 + ATP = 2-thiouridine(34) in tRNA + L-cysteinyl-[protein] + A + AMP + diphosphate + H(+). Its function is as follows. Catalyzes the 2-thiolation of uridine at the wobble position (U34) of tRNA, leading to the formation of s(2)U34. This chain is tRNA-specific 2-thiouridylase MnmA, found in Petrotoga mobilis (strain DSM 10674 / SJ95).